The primary structure comprises 271 residues: Cell surface glycoprotein CD200 receptor 2 (271 aa).

The N-terminal stretch at 1–23 (MSAPRLLISIIIMVSASSSSCMG) is a signal peptide. Over 24–239 (GKQMTQNYST…TSGSPALSLL (216 aa)) the chain is Extracellular. N-linked (GlcNAc...) asparagine glycosylation is found at asparagine 30, asparagine 39, asparagine 86, asparagine 92, asparagine 189, and asparagine 217. The Ig-like V-type domain maps to 46 to 132 (MDINAVLCCP…YRGIVVTPDG (87 aa)). The Ig-like C2-type domain occupies 133 to 221 (NFHRGYHLQV…SHLTGNKSLS (89 aa)). Residues cysteine 160 and cysteine 209 are joined by a disulfide bond. A helical membrane pass occupies residues 240 to 260 (IILYVKLSLFVVILVTTGFVF). Over 261 to 271 (FQRINHVRKVL) the chain is Cytoplasmic.

This sequence belongs to the CD200R family.

It is found in the membrane. Its function is as follows. May be a receptor for the CD200/OX2 cell surface glycoprotein. This chain is Cell surface glycoprotein CD200 receptor 2 (CD200R1L), found in Homo sapiens (Human).